Consider the following 852-residue polypeptide: Homeobox-leucine zipper protein ATHB-14 (852 aa).

The segment at 1 to 25 is disordered; that stretch reads MMMVHSMSRDMMNRESPDKGLDSGK. Residues 7–22 are compositionally biased toward basic and acidic residues; the sequence is MSRDMMNRESPDKGLD. The segment at residues 22-85 is a DNA-binding region (homeobox); sequence DSGKYVRYTP…NRRCREKQRK (64 aa). A coiled-coil region spans residues 80–122; the sequence is REKQRKEAARLQTVNRKLNAMNKLLMEENDRLQKQVSNLVYEN. The segment at 80–130 is ZIP domain; that stretch reads REKQRKEAARLQTVNRKLNAMNKLLMEENDRLQKQVSNLVYENGHMKHQLH. The span at 130-148 shows a compositional bias: polar residues; that stretch reads HTASGTTTDNSCESVVVSG. Residues 130-166 form a disordered region; the sequence is HTASGTTTDNSCESVVVSGQQHQQQNPNPQHQQRDAN. Residues 149-160 show a composition bias toward low complexity; sequence QQHQQQNPNPQH. Residues 164–392 form the START domain; the sequence is DANNPAGLLS…IAQETSGEVQ (229 aa).

It belongs to the HD-ZIP homeobox family. Class III subfamily. In terms of assembly, homodimer. Heterodimer with ZPR3. Interacts with ESR1 and ESR2. Interacts with ZPR3. In terms of tissue distribution, expressed in the center of the meristem and on the adaxial side of the leaves.

The protein resides in the nucleus. Its activity is regulated as follows. Inhibited by ZPR3. In terms of biological role, probable transcription factor involved in the determination of adaxial-abaxial polarity in ovule primordium. Specifies adaxial leaf fates. In Arabidopsis thaliana (Mouse-ear cress), this protein is Homeobox-leucine zipper protein ATHB-14 (ATHB-14).